The following is a 270-amino-acid chain: Plasmanylethanolamine desaturase 1 (270 aa).

3 helical membrane-spanning segments follow: residues 47-67 (WCSV…LLLL), 74-94 (PLVI…SGLV), and 161-181 (ALEQ…FGTF). A Histidine box-1 motif is present at residues 186–190 (HKWSH). A Histidine box-2 motif is present at residues 213–217 (HHRIH).

Belongs to the fatty acid desaturase CarF family.

It localises to the endoplasmic reticulum membrane. It catalyses the reaction a 1-(1,2-saturated alkyl)-2-acyl-sn-glycero-3-phosphoethanolamine + 2 Fe(II)-[cytochrome b5] + O2 + 2 H(+) = a 1-O-(1Z-alkenyl)-2-acyl-sn-glycero-3-phosphoethanolamine + 2 Fe(III)-[cytochrome b5] + 2 H2O. It carries out the reaction a 1-O-hexadecyl-2-acyl-sn-glycero-3-phosphoethanolamine + 2 Fe(II)-[cytochrome b5] + O2 + 2 H(+) = a 1-O-(1Z-hexadecenyl)-2-acyl-sn-glycero-3-phosphoethanolamine + 2 Fe(III)-[cytochrome b5] + 2 H2O. The enzyme catalyses a 1-O-octadecyl-2-acyl-sn-glycero-3-phosphoethanolamine + 2 Fe(II)-[cytochrome b5] + O2 + 2 H(+) = a 1-O-(1Z-octadecenyl)-2-acyl-sn-glycero-3-phosphoethanolamine + 2 Fe(III)-[cytochrome b5] + 2 H2O. The catalysed reaction is a 1-O-(9Z-octadecenyl)-2-acyl-sn-glycero-3-phosphoethanolamine + 2 Fe(II)-[cytochrome b5] + O2 + 2 H(+) = a 1-O-(1Z,9Z-octadecadienyl)-2-acyl-sn-glycero-3-phosphoethanolamine + 2 Fe(III)-[cytochrome b5] + 2 H2O. The protein operates within lipid metabolism; fatty acid metabolism. Functionally, plasmanylethanolamine desaturase involved in plasmalogen biogenesis in the endoplasmic reticulum membrane. Plasmalogens are glycerophospholipids with a hydrocarbon chain linked by a vinyl ether bond at the glycerol sn-1 position, and are involved in antioxidative and signaling mechanisms. The polypeptide is Plasmanylethanolamine desaturase 1 (Homo sapiens (Human)).